The chain runs to 468 residues: Putrescine aminotransferase (468 aa).

Residues 150–151 and Gln-274 contribute to the pyridoxal 5'-phosphate site; that span reads GT. N6-(pyridoxal phosphate)lysine is present on Lys-300. Thr-332 contacts pyridoxal 5'-phosphate.

This sequence belongs to the class-III pyridoxal-phosphate-dependent aminotransferase family. Putrescine aminotransferase subfamily. The cofactor is pyridoxal 5'-phosphate.

The enzyme catalyses an alkane-alpha,omega-diamine + 2-oxoglutarate = an omega-aminoaldehyde + L-glutamate. The catalysed reaction is putrescine + 2-oxoglutarate = 1-pyrroline + L-glutamate + H2O. It carries out the reaction cadaverine + 2-oxoglutarate = 5-aminopentanal + L-glutamate. It participates in amine and polyamine degradation; putrescine degradation; 4-aminobutanal from putrescine (transaminase route): step 1/1. Catalyzes the aminotransferase reaction from putrescine to 2-oxoglutarate, leading to glutamate and 4-aminobutanal, which spontaneously cyclizes to form 1-pyrroline. This is the first step in one of two pathways for putrescine degradation, where putrescine is converted into 4-aminobutanoate (gamma-aminobutyrate or GABA) via 4-aminobutanal. Also functions as a cadaverine transaminase in a a L-lysine degradation pathway to succinate that proceeds via cadaverine, glutarate and L-2-hydroxyglutarate. The protein is Putrescine aminotransferase of Pectobacterium atrosepticum (strain SCRI 1043 / ATCC BAA-672) (Erwinia carotovora subsp. atroseptica).